A 260-amino-acid polypeptide reads, in one-letter code: 1-(5-phosphoribosyl)-5-[(5-phosphoribosylamino)methylideneamino] imidazole-4-carboxamide isomerase (260 aa).

Asp-8 acts as the Proton acceptor in catalysis. Residue Asp-130 is the Proton donor of the active site.

Belongs to the HisA/HisF family.

It is found in the cytoplasm. It catalyses the reaction 1-(5-phospho-beta-D-ribosyl)-5-[(5-phospho-beta-D-ribosylamino)methylideneamino]imidazole-4-carboxamide = 5-[(5-phospho-1-deoxy-D-ribulos-1-ylimino)methylamino]-1-(5-phospho-beta-D-ribosyl)imidazole-4-carboxamide. It functions in the pathway amino-acid biosynthesis; L-histidine biosynthesis; L-histidine from 5-phospho-alpha-D-ribose 1-diphosphate: step 4/9. In Chlorobaculum tepidum (strain ATCC 49652 / DSM 12025 / NBRC 103806 / TLS) (Chlorobium tepidum), this protein is 1-(5-phosphoribosyl)-5-[(5-phosphoribosylamino)methylideneamino] imidazole-4-carboxamide isomerase.